Reading from the N-terminus, the 765-residue chain is Proton-coupled zinc antiporter SLC30A5 (765 aa).

Position 1 is an N-acetylmethionine (Met-1). The Cytoplasmic portion of the chain corresponds to 1 to 32 (MEEKYGGDVLAGPGGGGGLGPVDVPSARLTKY). A helical transmembrane segment spans residues 33 to 53 (IVLLCFTKFLKAVGLFESYDL). The Lumenal portion of the chain corresponds to 54-56 (LKA). A helical transmembrane segment spans residues 57 to 77 (VHIVQFIFILKLGTAFFMVLF). Residues 78–98 (QKPFSSGKTITKHQWIKIFKH) lie on the Cytoplasmic side of the membrane. A helical transmembrane segment spans residues 99–119 (AVAGCIISLLWFFGLTLCGPL). Residue Arg-120 is a topological domain, lumenal. A helical transmembrane segment spans residues 121–141 (TLLLFEHSDIVVISLLSVLFT). Over 142 to 152 (SSGGGPAKTRG) the chain is Cytoplasmic. A helical membrane pass occupies residues 153–173 (AAFFIIAVICLLLFDNDDLMA). The Lumenal portion of the chain corresponds to 174–193 (KMAEHPEGHHDSALTHMLYT). A helical transmembrane segment spans residues 194 to 214 (AIAFLGVADHKGGVLLLVLAL). At 215–238 (CCKVGFHTASRKLSVDVGGAKRLQ) the chain is on the cytoplasmic side. A helical membrane pass occupies residues 239–259 (ALSHLVSVLLLCPWVIVLSVT). Residues 260 to 267 (TESKVESW) are Lumenal-facing. A helical transmembrane segment spans residues 268-288 (FSLIMPFATVIFFVMILDFYV). The Cytoplasmic segment spans residues 289–303 (DSICSVKMEVSKCAR). The chain crosses the membrane as a helical span at residues 304–324 (YGSFPIFISALLFGNFWTHPI). At 325 to 342 (TDQLRAMNKAAHQESTEH) the chain is on the lumenal side. The helical transmembrane segment at 343 to 363 (VLSGGVVVSAIFFILSANILS) threads the bilayer. The Cytoplasmic portion of the chain corresponds to 364-418 (SPSKRGQKGTLIGYSPEGTPLYNFMGDAFQHSSQSIPRFIKESLKQILEESDSRQ). A helical transmembrane segment spans residues 419–439 (IFYFLCLNLLFTFVELFYGVL). The segment at 420-640 (FYFLCLNLLF…ILIFLSVVPL (221 aa)) is mediates homodimerization with SLC30A6. Over 440 to 448 (TNSLGLISD) the chain is Lumenal. A helical membrane pass occupies residues 449 to 469 (GFHMLFDCSALVMGLFAALMS). Zn(2+)-binding residues include His-451 and Asp-455. Over 470 to 483 (RWKATRIFSYGYGR) the chain is Cytoplasmic. Residues 484–504 (IEILSGFINGLFLIVIAFFVF) form a helical membrane-spanning segment. The Lumenal segment spans residues 505–520 (MESVARLIDPPELDTH). The helical transmembrane segment at 521–541 (MLTPVSVGGLIVNLIGICAFS) threads the bilayer. A his-rich loop; required for zinc transport region spans residues 542 to 578 (HAHSHAHGASQGSCHSSDHSHSHHMHGHSDHGHGHSH). The Cytoplasmic segment spans residues 542–592 (HAHSHAHGASQGSCHSSDHSHSHHMHGHSDHGHGHSHGSAGGGMNANMRGV). Residues 551-581 (SQGSCHSSDHSHSHHMHGHSDHGHGHSHGSA) form a disordered region. A helical transmembrane segment spans residues 593-613 (FLHVLADTLGSIGVIVSTVLI). 2 residues coordinate Zn(2+): His-595 and Asp-599. The Lumenal portion of the chain corresponds to 614–617 (EQFG). The helical transmembrane segment at 618–638 (WFIADPLCSLFIAILIFLSVV) threads the bilayer. The Cytoplasmic portion of the chain corresponds to 639-765 (PLIKDACQVL…KYCKDGTYIM (127 aa)).

Belongs to the cation diffusion facilitator (CDF) transporter (TC 2.A.4) family. SLC30A subfamily. In terms of assembly, heterodimer with SLC30A6/ZNT6; form a functional zinc ion transmembrane transporter. In terms of processing, could homodimerize through the formation of dityrosine bonds upon oxidative stress. In terms of tissue distribution, ubiquitously expressed. Highly expressed in pancreas, liver and kidney. Expressed abundantly in insulin-containing beta cells, undetectable in other endocrine cell types including glucagon-secreting alpha cells and most acinar cells (at protein level).

The protein resides in the golgi apparatus. It is found in the golgi stack membrane. Its subcellular location is the cytoplasmic vesicle. It localises to the COPII-coated vesicle membrane. The protein localises to the secretory vesicle membrane. The protein resides in the trans-Golgi network membrane. It is found in the endoplasmic reticulum membrane. Its subcellular location is the cell membrane. It localises to the apical cell membrane. The enzyme catalyses Zn(2+)(in) + 2 H(+)(out) = Zn(2+)(out) + 2 H(+)(in). Together with SLC30A6 forms a functional proton-coupled zinc ion antiporter mediating zinc entry into the lumen of organelles along the secretory pathway. By contributing to zinc ion homeostasis within the early secretory pathway, regulates the activation and folding of enzymes like alkaline phosphatases and enzymes involved in phosphatidylinositol glycan anchor biosynthesis. Through the transport of zinc into secretory granules of pancreatic beta-cells, plays an important role in the storage and secretion of insulin. Functionally, zinc ion:proton antiporter mediating influx and efflux of zinc at the plasma membrane. The sequence is that of Proton-coupled zinc antiporter SLC30A5 from Homo sapiens (Human).